The sequence spans 940 residues: Lysine-specific demethylase 7A (940 aa).

The PHD-type zinc finger occupies 37–88 (PVYCVCRQPYDVNRFMIECDVCKDWFHGSCVGVEEHHAVDIDLYHCPDCAAL). The segment at 97 to 114 (RRNWHRHDYTEVDDGSKP) is linker. Positions 230 to 386 (FSDTKMSELV…MQLRCYEMEK (157 aa)) constitute a JmjC domain. Residue threonine 279 participates in substrate binding. Histidine 282 and aspartate 284 together coordinate Fe cation. A substrate-binding site is contributed by lysine 299. Histidine 354 lines the Fe cation pocket. Disordered stretches follow at residues 483-509 (VKSQ…HSRR), 599-670 (LYTA…PDCT), 710-729 (SQKP…TSTS), 818-854 (NAQD…SSSI), and 876-920 (SPER…MATA). Serine 604 is subject to Phosphoserine. Polar residues predominate over residues 613–623 (TQNANMKTEQS). The span at 714–724 (SRQEIPVKREC) shows a compositional bias: basic and acidic residues.

This sequence belongs to the JHDM1 histone demethylase family. JHDM1D subfamily. Requires Fe(2+) as cofactor.

It is found in the nucleus. The enzyme catalyses N(6),N(6)-dimethyl-L-lysyl(9)-[histone H3] + 2 2-oxoglutarate + 2 O2 = L-lysyl(9)-[histone H3] + 2 formaldehyde + 2 succinate + 2 CO2. It carries out the reaction N(6),N(6)-dimethyl-L-lysyl(27)-[histone H3] + 2 2-oxoglutarate + 2 O2 = L-lysyl(27)-[histone H3] + 2 formaldehyde + 2 succinate + 2 CO2. It catalyses the reaction N(6),N(6)-dimethyl-L-lysyl(36)-[histone H3] + 2-oxoglutarate + O2 = N(6)-methyl-L-lysyl(36)-[histone H3] + formaldehyde + succinate + CO2. The catalysed reaction is N(6)-methyl-L-lysyl(20)-[histone H4] + 2-oxoglutarate + O2 = L-lysyl(20)-[histone H4] + formaldehyde + succinate + CO2. Its function is as follows. Histone demethylase required for brain development. Specifically demethylates dimethylated 'Lys-9', 'Lys-27' and 'Lys-36' (H3K9me2, H3K27me2, H3K36me2, respectively) of histone H3 and monomethylated histone H4 'Lys-20' residue (H4K20Me1), thereby playing a central role in histone code. Specifically binds trimethylated 'Lys-4' of histone H3 (H3K4me3), affecting histone demethylase specificity: in presence of H3K4me3, it has no demethylase activity toward H3K9me2, while it has high activity toward H3K27me2. Demethylates H3K9me2 in absence of H3K4me3. Has activity toward H4K20Me1 only when nucleosome is used as a substrate and when not histone octamer is used as substrate. The protein is Lysine-specific demethylase 7A (Kdm7a) of Mus musculus (Mouse).